Here is a 302-residue protein sequence, read N- to C-terminus: MNVTPKDLLDAGVHFGHQTKRWNPRSKPFVFDHRQGISIIDLGKTHAALEKACTFLEDTVGNGGNVLFVGTKRQAKDIIREAATSTNMPFCVDRWLGGTLTNYETVKRSIAKYKKYQQMETSGDMNKLASKEVAAIKREMVRMQKNFSGIVDMPGLPTAMFVVDVNHEKIAVAEAARSGIPCVGICDTNSDPSTLSHPIPGNDDAVKSIRIIVEAIVAAVQNGLSQRDARRAARGAADLKAAAAAAAGITGETAATPEVDLSKVELPADVAAVVEGEGESEAEPVVAKKKPVRAKRPAVKAE.

Positions 275–302 (EGEGESEAEPVVAKKKPVRAKRPAVKAE) are disordered. Residues 287–302 (AKKKPVRAKRPAVKAE) show a composition bias toward basic residues.

This sequence belongs to the universal ribosomal protein uS2 family.

The sequence is that of Small ribosomal subunit protein uS2 from Opitutus terrae (strain DSM 11246 / JCM 15787 / PB90-1).